Consider the following 335-residue polypeptide: Atypical chemokine receptor 1 (335 aa).

Residues 1 to 62 lie on the Extracellular side of the membrane; sequence MGNCLHPAEL…CNLLDDSALP (62 aa). Asparagine 16, asparagine 26, and asparagine 32 each carry an N-linked (GlcNAc...) asparagine glycan. Intrachain disulfides connect cysteine 50–cysteine 275 and cysteine 128–cysteine 194. Residues 63 to 83 form a helical membrane-spanning segment; that stretch reads FFILVSVLGILASGTVLFMFF. Residues 84–94 lie on the Cytoplasmic side of the membrane; sequence RPLFHWQLCPG. A helical membrane pass occupies residues 95–115; sequence WPVLAQLAVGSALFSIVVPIL. Residues 116 to 128 lie on the Extracellular side of the membrane; sequence APGLGNTRSSALC. The helical transmembrane segment at 129-152 threads the bilayer; it reads SLGYCVWYGSAFAQALLLGCHASL. The Cytoplasmic portion of the chain corresponds to 153–165; it reads GPKLGAGQVPGLT. The chain crosses the membrane as a helical span at residues 166–186; sequence LGLSVGLWGVAALLTLPITLA. Residues 187-206 are Extracellular-facing; it reads SGASGGLCTPAYSMELKALQ. The chain crosses the membrane as a helical span at residues 207–227; sequence ATHAVACLAVFVLLPLGLFGA. Residues 228-243 are Cytoplasmic-facing; the sequence is KGLKKALGMGPGPWMN. The chain crosses the membrane as a helical span at residues 244 to 264; sequence ILWAWFIFWWPHGVVLGLDFL. Topologically, residues 265–286 are extracellular; the sequence is VRSKLLLLSTCLAQQALDLLLN. A helical transmembrane segment spans residues 287–307; sequence LAEALAILHCVATPLLLALFC. Residues 308-335 lie on the Cytoplasmic side of the membrane; the sequence is HQATRTLLPSLPLPEGWSSHLDTLGSES.

The protein belongs to the G-protein coupled receptor 1 family. Atypical chemokine receptor subfamily. As to quaternary structure, (Microbial infection) Interacts (via N-terminal extracellular domain) with Plasmodium knowlesi Duffy receptor alpha form (DBPalpha) (via region II).

It localises to the early endosome. It is found in the recycling endosome. The protein resides in the membrane. Atypical chemokine receptor that controls chemokine levels and localization via high-affinity chemokine binding that is uncoupled from classic ligand-driven signal transduction cascades, resulting instead in chemokine sequestration, degradation, or transcytosis. Also known as interceptor (internalizing receptor) or chemokine-scavenging receptor or chemokine decoy receptor. Has a promiscuous chemokine-binding profile, interacting with inflammatory chemokines of both the CXC and the CC subfamilies but not with homeostatic chemokines. Acts as a receptor for chemokines including CCL2, CCL5, CCL7, CCL11, CCL13, CCL14, CCL17, CXCL5, CXCL6, IL8/CXCL8, CXCL11, GRO, RANTES, MCP-1 and TARC. May regulate chemokine bioavailability and, consequently, leukocyte recruitment through two distinct mechanisms: when expressed in endothelial cells, it sustains the abluminal to luminal transcytosis of tissue-derived chemokines and their subsequent presentation to circulating leukocytes; when expressed in erythrocytes, serves as blood reservoir of cognate chemokines but also as a chemokine sink, buffering potential surges in plasma chemokine levels. Functionally, (Microbial infection) Acts as a receptor for the malaria parasite Plasmodium knowlesi. This Macaca mulatta (Rhesus macaque) protein is Atypical chemokine receptor 1 (ACKR1).